A 311-amino-acid chain; its full sequence is MSTPLIPPAPPKKTLQLYTPQYYGLCTLGGLLACGTTHSAITPLDLIKCRKQVNPNIYPGNIAGFKTILSKEGLRGLYTGGMPTLIGYSLQGCGKYGFYELFKHKYSTLVGAQKAHEYRTSIYLAASASAELLADIMLCPMEAIKVRVQTSNPRFANTTREAWSKIVTNEGFGTLYRGLAPLWFRQIPYTMMKFASFERIVEALYTYIGKPKNMYSKAEKIGISFAGGYMAGVLCAIISHPADVMVSKLNSNKKAGEGAGAAAARIYKEIGFSGLWNGLGVRIVMIGTLTGAQWLIYDSFKIMCGFPATGA.

Topologically, residues 1 to 23 (MSTPLIPPAPPKKTLQLYTPQYY) are mitochondrial intermembrane. 3 Solcar repeats span residues 21–105 (QYYG…FKHK), 118–203 (YRTS…IVEA), and 219–303 (EKIG…FKIM). Residues 24–44 (GLCTLGGLLACGTTHSAITPL) form a helical membrane-spanning segment. At 45 to 67 (DLIKCRKQVNPNIYPGNIAGFKT) the chain is on the mitochondrial matrix side. The helical transmembrane segment at 68–88 (ILSKEGLRGLYTGGMPTLIGY) threads the bilayer. Residues 89–120 (SLQGCGKYGFYELFKHKYSTLVGAQKAHEYRT) are Mitochondrial intermembrane-facing. Residues 121-141 (SIYLAASASAELLADIMLCPM) traverse the membrane as a helical segment. Topologically, residues 142–171 (EAIKVRVQTSNPRFANTTREAWSKIVTNEG) are mitochondrial matrix. A helical transmembrane segment spans residues 172 to 192 (FGTLYRGLAPLWFRQIPYTMM). Topologically, residues 193-220 (KFASFERIVEALYTYIGKPKNMYSKAEK) are mitochondrial intermembrane. The helical transmembrane segment at 221–241 (IGISFAGGYMAGVLCAIISHP) threads the bilayer. Residues 242 to 269 (ADVMVSKLNSNKKAGEGAGAAAARIYKE) lie on the Mitochondrial matrix side of the membrane. The chain crosses the membrane as a helical span at residues 270-290 (IGFSGLWNGLGVRIVMIGTLT). At 291–311 (GAQWLIYDSFKIMCGFPATGA) the chain is on the mitochondrial intermembrane side.

This sequence belongs to the mitochondrial carrier (TC 2.A.29) family.

It is found in the mitochondrion inner membrane. In terms of biological role, transport of phosphate groups from the cytosol to the mitochondrial matrix. In Schizosaccharomyces pombe (strain 972 / ATCC 24843) (Fission yeast), this protein is Probable mitochondrial phosphate carrier protein.